Here is a 461-residue protein sequence, read N- to C-terminus: Aspartyl/glutamyl-tRNA(Asn/Gln) amidotransferase subunit B (461 aa).

It belongs to the GatB/GatE family. GatB subfamily. Heterotrimer of A, B and C subunits.

It catalyses the reaction L-glutamyl-tRNA(Gln) + L-glutamine + ATP + H2O = L-glutaminyl-tRNA(Gln) + L-glutamate + ADP + phosphate + H(+). The enzyme catalyses L-aspartyl-tRNA(Asn) + L-glutamine + ATP + H2O = L-asparaginyl-tRNA(Asn) + L-glutamate + ADP + phosphate + 2 H(+). In terms of biological role, allows the formation of correctly charged Asn-tRNA(Asn) or Gln-tRNA(Gln) through the transamidation of misacylated Asp-tRNA(Asn) or Glu-tRNA(Gln) in organisms which lack either or both of asparaginyl-tRNA or glutaminyl-tRNA synthetases. The reaction takes place in the presence of glutamine and ATP through an activated phospho-Asp-tRNA(Asn) or phospho-Glu-tRNA(Gln). The polypeptide is Aspartyl/glutamyl-tRNA(Asn/Gln) amidotransferase subunit B (Methanopyrus kandleri (strain AV19 / DSM 6324 / JCM 9639 / NBRC 100938)).